Here is a 337-residue protein sequence, read N- to C-terminus: Phosphate acyltransferase (337 aa).

Belongs to the PlsX family. Homodimer. Probably interacts with PlsY.

It is found in the cytoplasm. The enzyme catalyses a fatty acyl-[ACP] + phosphate = an acyl phosphate + holo-[ACP]. It participates in lipid metabolism; phospholipid metabolism. In terms of biological role, catalyzes the reversible formation of acyl-phosphate (acyl-PO(4)) from acyl-[acyl-carrier-protein] (acyl-ACP). This enzyme utilizes acyl-ACP as fatty acyl donor, but not acyl-CoA. In Listeria welshimeri serovar 6b (strain ATCC 35897 / DSM 20650 / CCUG 15529 / CIP 8149 / NCTC 11857 / SLCC 5334 / V8), this protein is Phosphate acyltransferase.